Consider the following 291-residue polypeptide: Filament protein FIN1 (291 aa).

S54 is modified (phosphoserine). T68 is subject to Phosphothreonine. Residues S74 and S88 each carry the phosphoserine modification. Residues 254–284 (VELKEIKDLLLQMLRRQREIESRLSNIELQL) are a coiled coil.

Homooligomer; in vitro, FIN1 self-assembles into 10 nm diameter filaments. Interacts with the 14-3-3 proteins BMH1 and BMH2, and the protein phosphatase 1 complex catalytic subunit GLC7. In terms of processing, phosphorylated by CDC28. Phosphorylation is required for BMH1 and BMH2 interaction. Dephosphorylation by GLC7 depends on the presence of BMH1 and BMH2.

It localises to the nucleus. It is found in the cytoplasm. The protein localises to the cytoskeleton. The protein resides in the spindle pole. In terms of biological role, forms cell-cycle specific filaments between the spindle pole bodies of dividing yeast cells. In Saccharomyces cerevisiae (strain ATCC 204508 / S288c) (Baker's yeast), this protein is Filament protein FIN1 (FIN1).